Consider the following 356-residue polypeptide: CLIP domain-containing serine protease C9 (356 aa).

Residues 49–94 (SCDTPQVIGGKCMNISLCDPAFVHSIAYQEHTPVCQQNAFYRVICC) enclose the Clip domain. 4 disulfide bridges follow: Cys50–Cys93, Cys60–Cys83, Cys66–Cys94, and Cys139–Cys155. N-linked (GlcNAc...) asparagine glycosylation is present at Asn62. One can recognise a Peptidase S1 domain in the interval 109 to 351 (IMHGIEAEPG…YFGWIKETVS (243 aa)). Catalysis depends on charge relay system residues His154 and Asp194. A disulfide bridge links Cys258 with Cys284. A glycan (N-linked (GlcNAc...) asparagine) is linked at Asn292. A disulfide bridge links Cys300 with Cys328. Ser304 acts as the Charge relay system in catalysis.

It belongs to the peptidase S1 family. CLIP subfamily. As to quaternary structure, in the active form, heterodimer of a p12 subunit and a p30 subunit; disulfide-linked. Secreted as a full-length protein. Following bacterium E.coli infection, proteolytically cleaved into two chains, p12 and p30, which remain covalently linked.

The protein resides in the secreted. Functionally, probable serine protease which plays an essential role in the innate immune response against bacteria and protozoa infection by activating the melanization cascade. In the susceptible strain G3, appears to be dispensable for ookinete elimination which occurs by lysis. This Anopheles gambiae (African malaria mosquito) protein is CLIP domain-containing serine protease C9.